The following is a 132-amino-acid chain: Inactive D-aminoacyl-tRNA deacylase (132 aa).

Belongs to the DTD family.

Its function is as follows. A non-functional D-aminoacyl-tRNA deacylase. This Bacillus subtilis (strain 168) protein is Inactive D-aminoacyl-tRNA deacylase.